The following is a 346-amino-acid chain: Melatonin receptor type 1C (346 aa).

Residues 1–26 (MERPGSNGSCSGCRLEGGPAARAASG) are Extracellular-facing. Asparagine 7 carries an N-linked (GlcNAc...) asparagine glycan. A helical membrane pass occupies residues 27-47 (LAAVLIVTIVVDVLGNALVIL). The Cytoplasmic portion of the chain corresponds to 48 to 60 (SVLRNKKLRNAGN). The helical transmembrane segment at 61–81 (IFVVSLSVADLVVAVYPYPLI) threads the bilayer. Over 82-99 (LSAIFHNGWTMGNIHCQI) the chain is Extracellular. Cysteines 97 and 174 form a disulfide. Residues 100–120 (SGFLMGLSVIGSIFNITAIAI) form a helical membrane-spanning segment. Topologically, residues 121 to 139 (NRYCYICHSLRYDKLFNLK) are cytoplasmic. A helical membrane pass occupies residues 140–160 (NTCCYICLTWTLTVVAIVPNF). The Extracellular portion of the chain corresponds to 161–184 (FVGSLQYDPRIYSCTFAQTVSTSY). The chain crosses the membrane as a helical span at residues 185–205 (TITVVVVHFIVPLSIVTFCYL). At 206-237 (RIWILVIQVKHRVRQDCKQKIRAADIRNFLTM) the chain is on the cytoplasmic side. Residues 238–258 (FVVFVLFAVCWGPLNFIGLAV) form a helical membrane-spanning segment. Over 259 to 271 (SINPSKVQPHIPE) the chain is Extracellular. Residues 272-292 (WLFVLSYFMAYFNSCLNAVIY) form a helical membrane-spanning segment. Residues 293–346 (GLLNQNFRKEYKRILLMLRTPRLLFIDVSKGGTEGLKSKPSPAVTNNNQAEIHL) are Cytoplasmic-facing. Residues 326-346 (EGLKSKPSPAVTNNNQAEIHL) are disordered. The span at 335–346 (AVTNNNQAEIHL) shows a compositional bias: polar residues.

It belongs to the G-protein coupled receptor 1 family. Expressed in optic tectum, neostriatum, hypothalamus, thalamus and pineal gland, less in cerebellum and retina.

The protein localises to the cell membrane. In terms of biological role, high affinity receptor for melatonin. The activity of this receptor is mediated by pertussis toxin sensitive G proteins that inhibits adenylate cyclase activity. This chain is Melatonin receptor type 1C, found in Gallus gallus (Chicken).